A 235-amino-acid chain; its full sequence is tRNA (guanine-N(1)-)-methyltransferase (235 aa).

S-adenosyl-L-methionine-binding positions include G114 and 134 to 139 (IGDYIL).

The protein belongs to the RNA methyltransferase TrmD family. In terms of assembly, homodimer.

The protein localises to the cytoplasm. The catalysed reaction is guanosine(37) in tRNA + S-adenosyl-L-methionine = N(1)-methylguanosine(37) in tRNA + S-adenosyl-L-homocysteine + H(+). Its function is as follows. Specifically methylates guanosine-37 in various tRNAs. In Ehrlichia ruminantium (strain Gardel), this protein is tRNA (guanine-N(1)-)-methyltransferase.